Here is a 252-residue protein sequence, read N- to C-terminus: Imidazole glycerol phosphate synthase subunit HisF (252 aa).

Residues D11 and D130 contribute to the active site.

Belongs to the HisA/HisF family. In terms of assembly, heterodimer of HisH and HisF.

Its subcellular location is the cytoplasm. The catalysed reaction is 5-[(5-phospho-1-deoxy-D-ribulos-1-ylimino)methylamino]-1-(5-phospho-beta-D-ribosyl)imidazole-4-carboxamide + L-glutamine = D-erythro-1-(imidazol-4-yl)glycerol 3-phosphate + 5-amino-1-(5-phospho-beta-D-ribosyl)imidazole-4-carboxamide + L-glutamate + H(+). It participates in amino-acid biosynthesis; L-histidine biosynthesis; L-histidine from 5-phospho-alpha-D-ribose 1-diphosphate: step 5/9. IGPS catalyzes the conversion of PRFAR and glutamine to IGP, AICAR and glutamate. The HisF subunit catalyzes the cyclization activity that produces IGP and AICAR from PRFAR using the ammonia provided by the HisH subunit. This Aromatoleum aromaticum (strain DSM 19018 / LMG 30748 / EbN1) (Azoarcus sp. (strain EbN1)) protein is Imidazole glycerol phosphate synthase subunit HisF.